Here is a 174-residue protein sequence, read N- to C-terminus: Crossover junction endodeoxyribonuclease RuvC (174 aa).

Catalysis depends on residues D8, E67, and D139. Residues D8, E67, and D139 each coordinate Mg(2+).

Belongs to the RuvC family. As to quaternary structure, homodimer which binds Holliday junction (HJ) DNA. The HJ becomes 2-fold symmetrical on binding to RuvC with unstacked arms; it has a different conformation from HJ DNA in complex with RuvA. In the full resolvosome a probable DNA-RuvA(4)-RuvB(12)-RuvC(2) complex forms which resolves the HJ. The cofactor is Mg(2+).

The protein localises to the cytoplasm. The enzyme catalyses Endonucleolytic cleavage at a junction such as a reciprocal single-stranded crossover between two homologous DNA duplexes (Holliday junction).. The RuvA-RuvB-RuvC complex processes Holliday junction (HJ) DNA during genetic recombination and DNA repair. Endonuclease that resolves HJ intermediates. Cleaves cruciform DNA by making single-stranded nicks across the HJ at symmetrical positions within the homologous arms, yielding a 5'-phosphate and a 3'-hydroxyl group; requires a central core of homology in the junction. The consensus cleavage sequence is 5'-(A/T)TT(C/G)-3'. Cleavage occurs on the 3'-side of the TT dinucleotide at the point of strand exchange. HJ branch migration catalyzed by RuvA-RuvB allows RuvC to scan DNA until it finds its consensus sequence, where it cleaves and resolves the cruciform DNA. In Pseudomonas fluorescens (strain ATCC BAA-477 / NRRL B-23932 / Pf-5), this protein is Crossover junction endodeoxyribonuclease RuvC.